Consider the following 205-residue polypeptide: Ribonuclease HII (205 aa).

One can recognise an RNase H type-2 domain in the interval 16–205 (VSEVGIDEVG…KSFLNQSDLI (190 aa)). Positions 22, 23, and 118 each coordinate a divalent metal cation.

The protein belongs to the RNase HII family. Mn(2+) is required as a cofactor. Mg(2+) serves as cofactor.

It localises to the cytoplasm. The enzyme catalyses Endonucleolytic cleavage to 5'-phosphomonoester.. In terms of biological role, endonuclease that specifically degrades the RNA of RNA-DNA hybrids. This chain is Ribonuclease HII, found in Prochlorococcus marinus (strain MIT 9312).